The following is a 1002-amino-acid chain: Inversin-B (1002 aa).

ANK repeat units follow at residues 9-39 (SLAS…VIDQ), 43-72 (LGRT…KVNR), 76-105 (SGRT…DCTH), 109-140 (CDIT…QVDA), 144-173 (RKQT…NIGI), 177-209 (EGKI…TESL), 216-246 (EGRT…NVAP), 250-279 (LFRT…SPNI), 284-313 (QGAT…VRDE), 317-346 (EGRT…KLEV), 352-381 (YGGT…QADA), 385-414 (MKHT…KVHL), 418-447 (DGRS…NPDA), 451-480 (EGRT…DPNI), 484-513 (NGRT…FPNQ), and 519-549 (ERYT…SIAA). A D-box 1 motif is present at residues 486–494 (RTALHWSCN). The IQ 1 domain occupies 551-580 (QDIAAFKIQAVYKGHKVRRAFQERKNLLMK). Composition is skewed to basic and acidic residues over residues 586-599 (KGAA…ENRQ), 609-621 (KQKD…RQNK), and 643-656 (AEDR…ENLE). Disordered stretches follow at residues 586–804 (KGAA…KGRR) and 862–886 (SAKT…SSSA). 2 stretches are compositionally biased toward polar residues: residues 670 to 680 (QRITAQIQSSP) and 687 to 706 (NSIQ…SSPL). Basic and acidic residues-rich tracts occupy residues 733–763 (HQME…EERK) and 770–796 (QSSD…EGKK). Positions 959 to 967 (RKQLFQRKN) match the D-box 2 motif. An IQ 2 domain is found at 966–995 (KNHAATVIQKAWRTYWVRKSSCKTRHSRSQ).

As to quaternary structure, interacts with apc2. Binds calmodulin.

The protein localises to the cytoplasm. It localises to the cytoskeleton. In terms of biological role, required for normal renal development and establishment of left-right axis. Probably acts as a molecular switch between different Wnt signaling pathways. Inhibits the canonical Wnt pathway by targeting cytoplasmic disheveled for degradation by the ubiquitin-proteasome. This suggests that it is required in renal development to oppose the repression of terminal differentiation of tubular epithelial cells by Wnt signaling. Plays a central role in convergent extension movements in gastrulating embryos, a processus regulated by Wnt signaling. The protein is Inversin-B (invs-b) of Xenopus laevis (African clawed frog).